Reading from the N-terminus, the 353-residue chain is UDP-N-acetylglucosamine--N-acetylmuramyl-(pentapeptide) pyrophosphoryl-undecaprenol N-acetylglucosamine transferase (353 aa).

UDP-N-acetyl-alpha-D-glucosamine-binding positions include 11-13 (SAG), arginine 164, serine 194, and glutamine 289.

This sequence belongs to the glycosyltransferase 28 family. MurG subfamily.

It is found in the cell membrane. The enzyme catalyses di-trans,octa-cis-undecaprenyl diphospho-N-acetyl-alpha-D-muramoyl-L-alanyl-D-glutamyl-meso-2,6-diaminopimeloyl-D-alanyl-D-alanine + UDP-N-acetyl-alpha-D-glucosamine = di-trans,octa-cis-undecaprenyl diphospho-[N-acetyl-alpha-D-glucosaminyl-(1-&gt;4)]-N-acetyl-alpha-D-muramoyl-L-alanyl-D-glutamyl-meso-2,6-diaminopimeloyl-D-alanyl-D-alanine + UDP + H(+). The protein operates within cell wall biogenesis; peptidoglycan biosynthesis. Its function is as follows. Cell wall formation. Catalyzes the transfer of a GlcNAc subunit on undecaprenyl-pyrophosphoryl-MurNAc-pentapeptide (lipid intermediate I) to form undecaprenyl-pyrophosphoryl-MurNAc-(pentapeptide)GlcNAc (lipid intermediate II). In Clostridium kluyveri (strain ATCC 8527 / DSM 555 / NBRC 12016 / NCIMB 10680 / K1), this protein is UDP-N-acetylglucosamine--N-acetylmuramyl-(pentapeptide) pyrophosphoryl-undecaprenol N-acetylglucosamine transferase.